We begin with the raw amino-acid sequence, 531 residues long: Multidrug resistance protein fnx1 (531 aa).

The Cytoplasmic portion of the chain corresponds to 1–30 (MVDQVNLATEQTSLLYPEVSRKKEELSVNK). The helical transmembrane segment at 31–51 (WTILPALWVGGFLSALDMTIV) threads the bilayer. The Lumenal portion of the chain corresponds to 52-225 (ASLYPVIGSE…NASLLSRIDY (174 aa)). The helical transmembrane segment at 226 to 246 (LGSFLLVTGITALVVTFNMGG) threads the bilayer. Residues 247-252 (DAFPWV) are Cytoplasmic-facing. The helical transmembrane segment at 253–273 (SPVIITLLVSSVLILFAFYWV) threads the bilayer. Topologically, residues 274 to 297 (EKNIAVEPIAPVEILSQPTPLNVC) are lumenal. Residues 298 to 318 (LGNFFNAFCSFVIVYELPLFF) form a helical membrane-spanning segment. The Cytoplasmic portion of the chain corresponds to 319-360 (ETTLLMPSSEAGVRIFPYVISTSVGSLCSGLYMKKTGRYRNL). A helical transmembrane segment spans residues 361–381 (VIAGFFFMLMGIVSFAVLTSF). Residues 382–385 (GHRT) are Lumenal-facing. A helical membrane pass occupies residues 386 to 406 (PLILISLCLAMTGCSYGMNLT). The Cytoplasmic segment spans residues 407-496 (STLIAIISSL…QKLVIKSYAT (90 aa)). A helical membrane pass occupies residues 497 to 517 (AFTWTFALVAIIAFAGFWCSL). The Lumenal segment spans residues 518-531 (RIKQFYLHTSVDRS).

The protein belongs to the major facilitator superfamily.

It is found in the vacuole membrane. In terms of biological role, efflux transporter. Confers resistance to a variety of toxic compounds. The polypeptide is Multidrug resistance protein fnx1 (fnx1) (Schizosaccharomyces pombe (strain 972 / ATCC 24843) (Fission yeast)).